Consider the following 103-residue polypeptide: Host transcription reprogramming factor 6 (103 aa).

The N-terminal stretch at 1–19 (MRATTAFQVIAFLAVGAAA) is a signal peptide. The C2H2-type zinc-finger motif lies at 66-92 (YWCPNQVCAKTFATQEERDHHIANTVH). Residues 82–103 (ERDHHIANTVHPTNSKRDVLLQ) form a disordered region.

It localises to the secreted. The protein localises to the host nucleus. Probable secreted effector that translocates into the nuclei of host cells to reprogram the expression of targeted genes by binding on effector binding elements in rice. The chain is Host transcription reprogramming factor 6 from Pyricularia oryzae (strain 70-15 / ATCC MYA-4617 / FGSC 8958) (Rice blast fungus).